We begin with the raw amino-acid sequence, 166 residues long: MAKTLSKPASGALAPWLGISLIVILFDQLSKIAILKTFAYGAQHALTSFFNLVLVYNRGAAFGFLSTASGWQRWAFTALGVGATLVICFLLKRHGHQRLFSVSLALILGGALGNVIDRLVYGHVIDFLDFHLGAWHFPAFNLADSAITIGAVLLIYDELRRVRGSR.

4 helical membrane-spanning segments follow: residues 9-29, 45-65, 71-91, and 100-120; these read ASGA…FDQL, ALTS…FGFL, WQRW…CFLL, and FSVS…DRLV. Active-site residues include Asp-126 and Asp-144. Residues 135 to 155 traverse the membrane as a helical segment; the sequence is WHFPAFNLADSAITIGAVLLI.

This sequence belongs to the peptidase A8 family.

The protein resides in the cell inner membrane. The enzyme catalyses Release of signal peptides from bacterial membrane prolipoproteins. Hydrolyzes -Xaa-Yaa-Zaa-|-(S,diacylglyceryl)Cys-, in which Xaa is hydrophobic (preferably Leu), and Yaa (Ala or Ser) and Zaa (Gly or Ala) have small, neutral side chains.. It functions in the pathway protein modification; lipoprotein biosynthesis (signal peptide cleavage). Functionally, this protein specifically catalyzes the removal of signal peptides from prolipoproteins. The polypeptide is Lipoprotein signal peptidase (Burkholderia cenocepacia (strain ATCC BAA-245 / DSM 16553 / LMG 16656 / NCTC 13227 / J2315 / CF5610) (Burkholderia cepacia (strain J2315))).